Here is a 490-residue protein sequence, read N- to C-terminus: Betaine aldehyde dehydrogenase (490 aa).

K(+) contacts are provided by threonine 26, isoleucine 27, and aspartate 93. 150-152 (GAW) serves as a coordination point for NAD(+). The Charge relay system role is filled by lysine 162. 176 to 179 (KPSE) contributes to the NAD(+) binding site. Valine 180 is a K(+) binding site. Residue 230-233 (GVAS) coordinates NAD(+). Leucine 246 is a K(+) binding site. Glutamate 252 (proton acceptor) is an active-site residue. Positions 254, 286, and 387 each coordinate NAD(+). The active-site Nucleophile is cysteine 286. Cysteine 286 is subject to Cysteine sulfenic acid (-SOH). Residues lysine 457 and glycine 460 each coordinate K(+). Glutamate 464 serves as the catalytic Charge relay system.

The protein belongs to the aldehyde dehydrogenase family. As to quaternary structure, dimer of dimers. The cofactor is K(+).

It carries out the reaction betaine aldehyde + NAD(+) + H2O = glycine betaine + NADH + 2 H(+). Its pathway is amine and polyamine biosynthesis; betaine biosynthesis via choline pathway; betaine from betaine aldehyde: step 1/1. Functionally, involved in the biosynthesis of the osmoprotectant glycine betaine. Catalyzes the irreversible oxidation of betaine aldehyde to the corresponding acid. The protein is Betaine aldehyde dehydrogenase of Escherichia coli O9:H4 (strain HS).